A 378-amino-acid polypeptide reads, in one-letter code: Beta-1,3-N-acetylglucosaminyltransferase lunatic fringe (378 aa).

The Cytoplasmic segment spans residues 1-8; that stretch reads MLQRCGRR. The helical; Signal-anchor for type II membrane protein transmembrane segment at 9-29 threads the bilayer; sequence LLLALVGALLACLLVLTADPP. The Lumenal segment spans residues 30–378; it reads PTPMPAERGR…TPWCPRSAIF (349 aa). Residues 85–108 form a disordered region; sequence RDADPPPGVASRQGDGHPRPPAEV. Residue arginine 128 participates in substrate binding. N-linked (GlcNAc...) asparagine glycosylation is present at asparagine 166. 2 cysteine pairs are disulfide-bonded: cysteine 167–cysteine 178 and cysteine 196–cysteine 259. Aspartate 200 contacts substrate. Aspartate 201 contacts Mn(2+). Aspartate 289 is a catalytic residue. Histidine 313 serves as a coordination point for Mn(2+). Residues cysteine 363 and cysteine 372 are joined by a disulfide bond.

This sequence belongs to the glycosyltransferase 31 family. Requires Mn(2+) as cofactor. Co(2+) is required as a cofactor. In terms of processing, a soluble form may be derived from the membrane form by proteolytic processing. Detected at 12.5 dpc in all tissues examined with the highest level observed in adult brain and spleen. Detected in the dental epithelium.

The protein resides in the golgi apparatus. The protein localises to the golgi apparatus membrane. It catalyses the reaction 3-O-(alpha-L-fucosyl)-L-threonyl-[EGF-like domain protein] + UDP-N-acetyl-alpha-D-glucosamine = 3-O-(N-acetyl-beta-D-glucosaminyl-(1-&gt;3)-alpha-L-fucosyl)-L-threonyl-[EGF-like domain protein] + UDP + H(+). The enzyme catalyses 3-O-(alpha-L-fucosyl)-L-seryl-[EGF-like domain protein] + UDP-N-acetyl-alpha-D-glucosamine = 3-O-(N-acetyl-beta-D-glucosaminyl-(1-&gt;3)-alpha-L-fucosyl)-L-seryl-[EGF-like domain protein] + UDP + H(+). In terms of biological role, glycosyltransferase that initiates the elongation of O-linked fucose residues attached to EGF-like repeats in the extracellular domain of Notch molecules. Modulates NOTCH1 activity by modifying O-fucose residues at specific EGF-like domains resulting in inhibition of NOTCH1 activation by JAG1 and enhancement of NOTCH1 activation by DLL1 via an increase in its binding to DLL1. Decreases the binding of JAG1 to NOTCH2 but not that of DLL1. Essential mediator of somite segmentation and patterning. During somite boundary formation, it restricts Notch activity in the presomitic mesoderm to a boundary-forming territory in the posterior half of the prospective somite. In this region, Notch function activates a set of genes that are involved in boundary formation and in anterior-posterior somite identity. Ectopically expressed in the thymus, Lfgn inhibits Notch signaling which results in inhibition of T-cell commitment and promotes B-cell development in lymphoid progenitors. May play a role in boundary formation of the enamel knot. This is Beta-1,3-N-acetylglucosaminyltransferase lunatic fringe from Mus musculus (Mouse).